The sequence spans 523 residues: Pentatricopeptide repeat-containing protein At1g64580 (523 aa).

13 PPR repeats span residues 43–77 (HHHHYRERLRNELHCIKFDDAFSLFCEMLQSRPIP), 78–112 (SIVDFTRVLTVIAKMNKFDIVIYLYHKMENLGISH), 113–147 (DLYSFTILIHCFCRCSRLSLALALLGKMMKLGFRP), 148–182 (SIVTLGSLLNGFCQGNRFQEAVSLVDSMDGFGFVP), 183–217 (NVVIYNTVINGLCKNRDLNNALEVFYCMEKKGIRA), 218–252 (DAVTYNTLISGLSNSGRWTDAARLLRDMVKRKIDP), 253–287 (NVIFFTALIDTFVKEGNLLEARNLYKEMIRRSVVP), 288–322 (NVFTYNSLINGFCIHGCLGDAKYMFDLMVSKGCFP), 323–357 (DVVTYNTLITGFCKSKRVEDGMKLFCEMTYQGLVG), 358–392 (DAFTYNTLIHGYCQAGKLNVAQKVFNRMVDCGVSP), 393–427 (DIVTYNILLDCLCNNGKIEKALVMVEDLQKSEMDV), 428–462 (DIITYNIIIQGLCRTDKLKEAWCLFRSLTRKGVKP), and 463–497 (DAIAYITMISGLCRKGLQREADKLCRRMKEDGFMP).

Belongs to the PPR family. P subfamily.

In Arabidopsis thaliana (Mouse-ear cress), this protein is Pentatricopeptide repeat-containing protein At1g64580.